The sequence spans 184 residues: Large ribosomal subunit protein uL18 (184 aa).

The protein belongs to the universal ribosomal protein uL18 family. In terms of assembly, part of the 50S ribosomal subunit. Contacts the 5S and 23S rRNAs.

This is one of the proteins that bind and probably mediate the attachment of the 5S RNA into the large ribosomal subunit, where it forms part of the central protuberance. This is Large ribosomal subunit protein uL18 (rpl18) from Haloferax volcanii (strain ATCC 29605 / DSM 3757 / JCM 8879 / NBRC 14742 / NCIMB 2012 / VKM B-1768 / DS2) (Halobacterium volcanii).